A 190-amino-acid chain; its full sequence is Recombination protein RecR (190 aa).

The C4-type zinc finger occupies 58–73; that stretch reads CTQCGGLSEDELCYIC. In terms of domain architecture, Toprim spans 81-167; it reads SSLCLVESAR…HFTKIAQGVP (87 aa).

It belongs to the RecR family.

May play a role in DNA repair. It seems to be involved in an RecBC-independent recombinational process of DNA repair. It may act with RecF and RecO. The sequence is that of Recombination protein RecR from Nitratiruptor sp. (strain SB155-2).